A 355-amino-acid chain; its full sequence is Putative transport protein PH1000 (355 aa).

8 helical membrane-spanning segments follow: residues 34-54 (VTWIIIITLVALAIKTILPFF), 55-75 (SPLFFAFITAYALYPLHIKLK), 84-104 (AILLTLFLLLGALMILLILVY), 158-178 (FSVPKYLLQVIVYLTFVYFFL), 212-232 (VWLLLNIVKGILMTLGFLIFK), 240-260 (ILAGLLTVLFSFIPLFEGWMI), 274-294 (IIAGIGLAVYGFTLVSPLPDF), and 310-330 (VLVLIGMIGGTWGLGLKGLII).

This sequence belongs to the autoinducer-2 exporter (AI-2E) (TC 2.A.86) family.

It localises to the cell membrane. In Pyrococcus horikoshii (strain ATCC 700860 / DSM 12428 / JCM 9974 / NBRC 100139 / OT-3), this protein is Putative transport protein PH1000.